The sequence spans 308 residues: Oxygen-dependent coproporphyrinogen-III oxidase (308 aa).

Substrate is bound at residue S100. A divalent metal cation-binding residues include H104 and H114. Catalysis depends on H114, which acts as the Proton donor. 116–118 (NFR) provides a ligand contact to substrate. A divalent metal cation contacts are provided by H153 and H183. The segment at 248–283 (YVEFNLVFDRGTIFGLQSGGRTESILSSMPPMATWK) is important for dimerization. 266 to 268 (GGR) contacts substrate.

The protein belongs to the aerobic coproporphyrinogen-III oxidase family. As to quaternary structure, homodimer. A divalent metal cation serves as cofactor.

The protein localises to the cytoplasm. It carries out the reaction coproporphyrinogen III + O2 + 2 H(+) = protoporphyrinogen IX + 2 CO2 + 2 H2O. The protein operates within porphyrin-containing compound metabolism; protoporphyrin-IX biosynthesis; protoporphyrinogen-IX from coproporphyrinogen-III (O2 route): step 1/1. Involved in the heme biosynthesis. Catalyzes the aerobic oxidative decarboxylation of propionate groups of rings A and B of coproporphyrinogen-III to yield the vinyl groups in protoporphyrinogen-IX. This is Oxygen-dependent coproporphyrinogen-III oxidase from Francisella tularensis subsp. holarctica (strain OSU18).